Consider the following 156-residue polypeptide: Movement protein P17 (156 aa).

A homodimerization region spans residues 38 to 54; the sequence is AEDVEEEAIAAQEELEF. The interval 57–156 is RNA-binding; that stretch reads DEAQARHSCL…RAAPKLIKRG (100 aa). 4 positions are modified to phosphoserine: serine 71, serine 79, serine 137, and serine 140. Residues 106-156 form a disordered region; the sequence is ASYFSSSARPLPPPPAPSLMSWTPIAKYHPSSPTSTSSKLRRAAPKLIKRG. A compositionally biased stretch (basic residues) spans 144-156; it reads KLRRAAPKLIKRG.

Belongs to the polerovirus movement protein family. Homodimer. Expressed as a nonphosphorylated 20kDa form and a phosphorylated 22kDa form. Phosphorylated by a host PKC-related kinase. Serine phosphorylation is required for plamodesma targeting.

It localises to the host cell junction. The protein resides in the host plasmodesma. Its subcellular location is the host chloroplast envelope. It is found in the host Golgi apparatus. The protein localises to the host mitochondrion outer membrane. Its function is as follows. Together with movement protein P3a, facilitates long-distance movement of virions in host. Transports viral genome to neighboring plant cells directly through plasmosdesmata, without any budding. The movement protein allows efficient cell to cell propagation, by bypassing the host cell wall barrier. Binds ssRNA. The polypeptide is Movement protein P17 (Solanum tuberosum (Potato)).